Here is a 422-residue protein sequence, read N- to C-terminus: Lipoyl synthase, mitochondrial (422 aa).

A mitochondrion-targeting transit peptide spans 1–34 (MAASSTRLRCLYASSAPAWKKSPSQSIISLSRHY). Residues 37 to 48 (TSSTTPSLNPDE) are compositionally biased toward polar residues. Positions 37–70 (TSSTTPSLNPDESSSSSSSTIPKRRKTTTFRDKL) are disordered. Residues cysteine 146, cysteine 151, cysteine 157, cysteine 177, cysteine 181, cysteine 184, and serine 383 each coordinate [4Fe-4S] cluster. The 213-residue stretch at 160–372 (GSDKSAATAT…RQRALEMGFL (213 aa)) folds into the Radical SAM core domain.

It belongs to the radical SAM superfamily. Lipoyl synthase family. [4Fe-4S] cluster serves as cofactor.

The protein resides in the mitochondrion. It catalyses the reaction [[Fe-S] cluster scaffold protein carrying a second [4Fe-4S](2+) cluster] + N(6)-octanoyl-L-lysyl-[protein] + 2 oxidized [2Fe-2S]-[ferredoxin] + 2 S-adenosyl-L-methionine + 4 H(+) = [[Fe-S] cluster scaffold protein] + N(6)-[(R)-dihydrolipoyl]-L-lysyl-[protein] + 4 Fe(3+) + 2 hydrogen sulfide + 2 5'-deoxyadenosine + 2 L-methionine + 2 reduced [2Fe-2S]-[ferredoxin]. Its pathway is protein modification; protein lipoylation via endogenous pathway; protein N(6)-(lipoyl)lysine from octanoyl-[acyl-carrier-protein]: step 2/2. Functionally, catalyzes the radical-mediated insertion of two sulfur atoms into the C-6 and C-8 positions of the octanoyl moiety bound to the lipoyl domains of lipoate-dependent enzymes, thereby converting the octanoylated domains into lipoylated derivatives. The protein is Lipoyl synthase, mitochondrial of Talaromyces stipitatus (strain ATCC 10500 / CBS 375.48 / QM 6759 / NRRL 1006) (Penicillium stipitatum).